Here is a 191-residue protein sequence, read N- to C-terminus: Large ribosomal subunit protein bL9 (191 aa).

Positions 151 to 191 are disordered; the sequence is AERQAKGESLTSADAIYGVDEDALKPEDFFNPEAEIESEEE.

It belongs to the bacterial ribosomal protein bL9 family.

Binds to the 23S rRNA. In Sinorhizobium medicae (strain WSM419) (Ensifer medicae), this protein is Large ribosomal subunit protein bL9.